The chain runs to 195 residues: Pyridoxal 5'-phosphate synthase subunit PdxT (195 aa).

Residue glycine 46–serine 48 coordinates L-glutamine. The active-site Nucleophile is the cysteine 78. Residues arginine 107 and isoleucine 136 to arginine 137 contribute to the L-glutamine site. Active-site charge relay system residues include histidine 173 and glutamate 175.

It belongs to the glutaminase PdxT/SNO family. In the presence of PdxS, forms a dodecamer of heterodimers. Only shows activity in the heterodimer.

The catalysed reaction is aldehydo-D-ribose 5-phosphate + D-glyceraldehyde 3-phosphate + L-glutamine = pyridoxal 5'-phosphate + L-glutamate + phosphate + 3 H2O + H(+). It carries out the reaction L-glutamine + H2O = L-glutamate + NH4(+). Its pathway is cofactor biosynthesis; pyridoxal 5'-phosphate biosynthesis. Its function is as follows. Catalyzes the hydrolysis of glutamine to glutamate and ammonia as part of the biosynthesis of pyridoxal 5'-phosphate. The resulting ammonia molecule is channeled to the active site of PdxS. This chain is Pyridoxal 5'-phosphate synthase subunit PdxT, found in Dehalococcoides mccartyi (strain CBDB1).